A 647-amino-acid polypeptide reads, in one-letter code: Replication protein E1 (647 aa).

The short motif at 86-88 (KRK) is the Nuclear localization signal element. Serine 92 carries the phosphoserine; by host modification. Positions 154 to 186 (TNGDAEGEHGGSVREECSSVDSAIDSENQDPKS) are disordered. A compositionally biased stretch (basic and acidic residues) spans 159–170 (EGEHGGSVREEC). Positions 183–349 (DPKSPTAQIK…LTVIQHGIDD (167 aa)) are DNA-binding region. Residues 448-598 (IEFISFLCAL…FPFDQNRNPV (151 aa)) enclose the SF3 helicase domain. Residue 474–481 (GPANTGKS) participates in ATP binding. A Glycyl lysine isopeptide (Lys-Gly) (interchain with G-Cter in SUMO) cross-link involves residue lysine 555.

It belongs to the papillomaviridae E1 protein family. In terms of assembly, can form hexamers. Interacts with E2 protein; this interaction increases E1 DNA binding specificity. Interacts with host DNA polymerase subunit POLA2. Interacts with host single stranded DNA-binding protein RPA1. Interacts with host TOP1; this interaction stimulates the enzymatic activity of TOP1. Phosphorylated. Post-translationally, sumoylated.

Its subcellular location is the host nucleus. The enzyme catalyses Couples ATP hydrolysis with the unwinding of duplex DNA by translocating in the 3'-5' direction.. The catalysed reaction is ATP + H2O = ADP + phosphate + H(+). ATP-dependent DNA 3'-5' helicase required for initiation of viral DNA replication. It forms a complex with the viral E2 protein. The E1-E2 complex binds to the replication origin which contains binding sites for both proteins. During the initial step, a dimer of E1 interacts with a dimer of protein E2 leading to a complex that binds the viral origin of replication with high specificity. Then, a second dimer of E1 displaces the E2 dimer in an ATP-dependent manner to form the E1 tetramer. Following this, two E1 monomers are added to each half of the site, which results in the formation of two E1 trimers on the viral ori. Subsequently, two hexamers will be created. The double hexamer acts as a bi-directional helicase machinery and unwinds the viral DNA and then recruits the host DNA polymerase to start replication. This chain is Replication protein E1, found in Human papillomavirus 39.